A 237-amino-acid chain; its full sequence is Orotidine 5'-phosphate decarboxylase (237 aa).

Residues aspartate 11, lysine 34, 61–70 (DLKLHDIPNT), threonine 124, arginine 186, glutamine 195, glycine 215, and arginine 216 contribute to the substrate site. Lysine 63 acts as the Proton donor in catalysis.

The protein belongs to the OMP decarboxylase family. Type 1 subfamily. In terms of assembly, homodimer.

The catalysed reaction is orotidine 5'-phosphate + H(+) = UMP + CO2. Its pathway is pyrimidine metabolism; UMP biosynthesis via de novo pathway; UMP from orotate: step 2/2. In terms of biological role, catalyzes the decarboxylation of orotidine 5'-monophosphate (OMP) to uridine 5'-monophosphate (UMP). This chain is Orotidine 5'-phosphate decarboxylase, found in Lactococcus lactis subsp. cremoris (strain MG1363).